The sequence spans 325 residues: Eukaryotic translation initiation factor 3 subunit I (325 aa).

WD repeat units lie at residues 8 to 47 (GHERSITQIKYNRDGDLLFTVAKDPVVNVWYSVNGERLGT), 50 to 89 (GHTGAVWCVDVDWDTRHVLSGSADNSCRLWDCETGKQLAL), 144 to 183 (CSESKITSAVWGPLGENIIAGHENGELNQYSAKSGEIVNS), 186 to 225 (EHSKQINDIQTSRDMTMFVTASKDCTSKLFDSTSLEHQKT), and 283 to 324 (GHFG…FEFE).

The protein belongs to the eIF-3 subunit I family. In terms of assembly, component of the eukaryotic translation initiation factor 3 (eIF-3) complex, which is composed of 13 subunits: eif3a, eif3b, eif3c, eif3d, eif3e, eif3f, eif3g, eif3h, eif3i, eif3j, eif3k, eif3l and eif3m.

The protein resides in the cytoplasm. Component of the eukaryotic translation initiation factor 3 (eIF-3) complex, which is involved in protein synthesis of a specialized repertoire of mRNAs and, together with other initiation factors, stimulates binding of mRNA and methionyl-tRNAi to the 40S ribosome. The eIF-3 complex specifically targets and initiates translation of a subset of mRNAs involved in cell proliferation. This Xenopus tropicalis (Western clawed frog) protein is Eukaryotic translation initiation factor 3 subunit I (eif3i).